The primary structure comprises 302 residues: Acidic endochitinase (302 aa).

The N-terminal stretch at 1 to 30 (MTNMTLRKHVIYFLFFISCSLSKPSDASRG) is a signal peptide. The GH18 domain occupies 31 to 302 (GIAIYWGQNG…GYSSSILASV (272 aa)). Cystine bridges form between cysteine 49–cysteine 96 and cysteine 79–cysteine 86. The Proton donor role is filled by glutamate 156. An intrachain disulfide couples cysteine 188 to cysteine 217.

Belongs to the glycosyl hydrolase 18 family. Chitinase class III subfamily.

The protein localises to the secreted. It localises to the extracellular space. The enzyme catalyses Random endo-hydrolysis of N-acetyl-beta-D-glucosaminide (1-&gt;4)-beta-linkages in chitin and chitodextrins.. Its function is as follows. This protein functions as a defense against chitin containing fungal pathogens. This chain is Acidic endochitinase (CHIB1), found in Arabidopsis thaliana (Mouse-ear cress).